We begin with the raw amino-acid sequence, 331 residues long: Adenosine deaminase (331 aa).

Histidine 12 and histidine 14 together coordinate Zn(2+). Substrate contacts are provided by histidine 14, aspartate 16, and glycine 170. Histidine 197 is a Zn(2+) binding site. Glutamate 200 functions as the Proton donor in the catalytic mechanism. Aspartate 278 serves as a coordination point for Zn(2+). Aspartate 279 is a binding site for substrate.

It belongs to the metallo-dependent hydrolases superfamily. Adenosine and AMP deaminases family. Adenosine deaminase subfamily. Requires Zn(2+) as cofactor.

The catalysed reaction is adenosine + H2O + H(+) = inosine + NH4(+). The enzyme catalyses 2'-deoxyadenosine + H2O + H(+) = 2'-deoxyinosine + NH4(+). Catalyzes the hydrolytic deamination of adenosine and 2-deoxyadenosine. The polypeptide is Adenosine deaminase (Shewanella putrefaciens (strain CN-32 / ATCC BAA-453)).